Here is a 239-residue protein sequence, read N- to C-terminus: Caffeoyl-CoA O-methyltransferase 1 (239 aa).

Substrate is bound at residue Lys-13. S-adenosyl-L-methionine contacts are provided by residues Thr-55, Glu-77, 79 to 80, Ser-85, Asp-103, and Ala-132; that span reads GV. Position 155 (Asp-155) interacts with substrate. Asp-155 is an a divalent metal cation binding site. Asp-157 contributes to the S-adenosyl-L-methionine binding site. A divalent metal cation contacts are provided by Asp-181 and Asn-182. Asn-186 is a substrate binding site.

The protein belongs to the class I-like SAM-binding methyltransferase superfamily. Cation-dependent O-methyltransferase family. CCoAMT subfamily. In terms of assembly, monomer. Mg(2+) is required as a cofactor. In terms of tissue distribution, mostly expressed in the bottom and middle parts of the stems.

It catalyses the reaction (E)-caffeoyl-CoA + S-adenosyl-L-methionine = (E)-feruloyl-CoA + S-adenosyl-L-homocysteine + H(+). The protein operates within aromatic compound metabolism; phenylpropanoid biosynthesis. In terms of biological role, methylates caffeoyl-CoA to feruloyl-CoA and 5-hydroxyferuloyl-CoA to sinapoyl-CoA. Plays a role in the synthesis of feruloylated polysaccharides. Involved in the reinforcement of the plant cell wall. Also involved in the responding to wounding or pathogen challenge by the increased formation of cell wall-bound ferulic acid polymers. The sequence is that of Caffeoyl-CoA O-methyltransferase 1 (CCOAOMT1) from Nicotiana tabacum (Common tobacco).